Reading from the N-terminus, the 378-residue chain is UDP-N-acetylglucosamine--N-acetylmuramyl-(pentapeptide) pyrophosphoryl-undecaprenol N-acetylglucosamine transferase (378 aa).

UDP-N-acetyl-alpha-D-glucosamine contacts are provided by residues 24-26, N144, R181, S215, and Q310; that span reads TAG.

This sequence belongs to the glycosyltransferase 28 family. MurG subfamily.

Its subcellular location is the cell membrane. The enzyme catalyses di-trans,octa-cis-undecaprenyl diphospho-N-acetyl-alpha-D-muramoyl-L-alanyl-D-glutamyl-meso-2,6-diaminopimeloyl-D-alanyl-D-alanine + UDP-N-acetyl-alpha-D-glucosamine = di-trans,octa-cis-undecaprenyl diphospho-[N-acetyl-alpha-D-glucosaminyl-(1-&gt;4)]-N-acetyl-alpha-D-muramoyl-L-alanyl-D-glutamyl-meso-2,6-diaminopimeloyl-D-alanyl-D-alanine + UDP + H(+). The protein operates within cell wall biogenesis; peptidoglycan biosynthesis. Its function is as follows. Cell wall formation. Catalyzes the transfer of a GlcNAc subunit on undecaprenyl-pyrophosphoryl-MurNAc-pentapeptide (lipid intermediate I) to form undecaprenyl-pyrophosphoryl-MurNAc-(pentapeptide)GlcNAc (lipid intermediate II). In Nocardia farcinica (strain IFM 10152), this protein is UDP-N-acetylglucosamine--N-acetylmuramyl-(pentapeptide) pyrophosphoryl-undecaprenol N-acetylglucosamine transferase.